Consider the following 419-residue polypeptide: Multifunctional CCA protein (419 aa).

Gly-8 and Arg-11 together coordinate ATP. CTP is bound by residues Gly-8 and Arg-11. Mg(2+)-binding residues include Asp-21 and Asp-23. ATP is bound by residues Arg-91, Arg-141, and Arg-144. The CTP site is built by Arg-91, Arg-141, and Arg-144. The HD domain maps to 230 to 331 (TGVHVMMVLD…VRLLERCDAL (102 aa)).

This sequence belongs to the tRNA nucleotidyltransferase/poly(A) polymerase family. Bacterial CCA-adding enzyme type 1 subfamily. Monomer. Can also form homodimers and oligomers. It depends on Mg(2+) as a cofactor. Ni(2+) is required as a cofactor.

The catalysed reaction is a tRNA precursor + 2 CTP + ATP = a tRNA with a 3' CCA end + 3 diphosphate. The enzyme catalyses a tRNA with a 3' CCA end + 2 CTP + ATP = a tRNA with a 3' CCACCA end + 3 diphosphate. Functionally, catalyzes the addition and repair of the essential 3'-terminal CCA sequence in tRNAs without using a nucleic acid template. Adds these three nucleotides in the order of C, C, and A to the tRNA nucleotide-73, using CTP and ATP as substrates and producing inorganic pyrophosphate. tRNA 3'-terminal CCA addition is required both for tRNA processing and repair. Also involved in tRNA surveillance by mediating tandem CCA addition to generate a CCACCA at the 3' terminus of unstable tRNAs. While stable tRNAs receive only 3'-terminal CCA, unstable tRNAs are marked with CCACCA and rapidly degraded. This is Multifunctional CCA protein from Paracidovorax citrulli (strain AAC00-1) (Acidovorax citrulli).